Consider the following 880-residue polypeptide: EP-cadherin (880 aa).

The N-terminal stretch at 1-28 is a signal peptide; it reads MGSTRLRNASVWLCGLLCLLQVVPSINA. The propeptide occupies 29–155; the sequence is DVSGCKPGFS…THTGLKRKKR (127 aa). The N-linked (GlcNAc...) asparagine glycan is linked to N61. Cadherin domains lie at 156–263, 264–376, 377–487, 488–593, and 594–704; these read DWVI…RPKF, TQDV…APIF, DPKT…APFF, VPAV…DNGP, and VPSP…GFDL. Residues 156 to 703 lie on the Extracellular side of the membrane; it reads DWVIPPIKVS…CQEKLVGGFD (548 aa). T343, T382, and T400 each carry an O-linked (GalNAc...) threonine glycan. N425 is a glycosylation site (N-linked (GlcNAc...) asparagine). O-linked (GalNAc...) threonine glycosylation is found at T428, T469, T471, T473, and T475. N-linked (GlcNAc...) asparagine glycosylation occurs at N558. O-linked (GalNAc...) threonine glycosylation is found at T562, T576, T578, and T580. Intrachain disulfides connect C603–C687 and C685–C694. N681 is a glycosylation site (N-linked (GlcNAc...) asparagine). The chain crosses the membrane as a helical span at residues 704–728; the sequence is LPIILVILGSVLALLILFLLLLLFL. Topologically, residues 729–880 are cytoplasmic; that stretch reads KRKKVVKEPL…DMYGGDDDEE (152 aa). The interval 790 to 826 is disordered; the sequence is PAPHYRPRPSNPDEIGNFIDENLDAADNDPTAPPYDS.

In terms of assembly, interacts with CTNNB1.

The protein localises to the cell membrane. Cadherins are calcium-dependent cell adhesion proteins. They preferentially interact with themselves in a homophilic manner in connecting cells; cadherins may thus contribute to the sorting of heterogeneous cell types. This is EP-cadherin from Xenopus laevis (African clawed frog).